A 289-amino-acid polypeptide reads, in one-letter code: Ribosomal RNA small subunit methyltransferase A (289 aa).

Residues asparagine 33, valine 35, glycine 60, glutamate 81, aspartate 111, and asparagine 130 each coordinate S-adenosyl-L-methionine.

The protein belongs to the class I-like SAM-binding methyltransferase superfamily. rRNA adenine N(6)-methyltransferase family. RsmA subfamily.

The protein resides in the cytoplasm. The catalysed reaction is adenosine(1518)/adenosine(1519) in 16S rRNA + 4 S-adenosyl-L-methionine = N(6)-dimethyladenosine(1518)/N(6)-dimethyladenosine(1519) in 16S rRNA + 4 S-adenosyl-L-homocysteine + 4 H(+). In terms of biological role, specifically dimethylates two adjacent adenosines (A1518 and A1519) in the loop of a conserved hairpin near the 3'-end of 16S rRNA in the 30S particle. May play a critical role in biogenesis of 30S subunits. The sequence is that of Ribosomal RNA small subunit methyltransferase A from Corynebacterium efficiens (strain DSM 44549 / YS-314 / AJ 12310 / JCM 11189 / NBRC 100395).